We begin with the raw amino-acid sequence, 382 residues long: Adenosine 3'-phospho 5'-phosphosulfate transporter 2 (382 aa).

Over residues Met1–Gly10 the composition is skewed to polar residues. The disordered stretch occupies residues Met1 to Glu33. 10 consecutive transmembrane segments (helical) span residues Leu56–Phe76, Pro83–Glu103, Val121–Leu141, Pro144–Ile164, Gly170–Ala190, Asn197–Gly217, Val234–Gly254, Phe271–Leu291, Leu299–Phe319, and Phe323–Tyr343.

It belongs to the nucleotide-sugar transporter family. SLC35B subfamily.

Its subcellular location is the golgi apparatus membrane. Functionally, mediates the transport of adenosine 3'-phospho 5'-phosphosulfate (PAPS), from cytosol into Golgi. PAPS is a universal sulfuryl donor for sulfation events that take place in the Golgi. Essential for viability. Involved in glycosaminoglycan synthesis and the subsequent signaling. May be involved in hh and dpp signaling by controlling the sulfation of heparan sulfate (HS). The protein is Adenosine 3'-phospho 5'-phosphosulfate transporter 2 of Aedes aegypti (Yellowfever mosquito).